A 368-amino-acid chain; its full sequence is Decarboxylase yanB (368 aa).

Zn(2+)-binding residues include His-7, His-9, and His-159. N-linked (GlcNAc...) asparagine glycosylation is present at Asn-169. Asp-283 is a Zn(2+) binding site. Residues 339–359 traverse the membrane as a helical segment; sequence WGAFSACLLLPVGLSALYSVL.

The protein belongs to the metallo-dependent hydrolases superfamily. ACMSD family.

It is found in the membrane. It catalyses the reaction 6-methylsalicylate + H(+) = 3-methylphenol + CO2. Its pathway is secondary metabolite biosynthesis; terpenoid biosynthesis. Functionally, decarboxylase; part of the gene cluster that mediates the biosynthesis of yanuthone D, a fungal isoprenoid epoxycyclohexenone that acts as an antibiotic against fungi and bacteria. The first step of the pathway is the synthesis of 6-methylsalicylic acid (6-MSA) by the polyketide synthase yanA. 6-MSA is then converted to m-cresol by the decarboxylase yanB. The cytochrome P450 monooxygenase yanC then catalyzes the oxidation of m-cresol to toluquinol. Epoxidation of toluquinol is then performed by the short chain dehydrogenase yanD, with the help of yanE, and a further prenylation by yanG leads to 7-deacetoxyyanuthone A. The next step is the hydroxylation of C-22 of 7-deacetoxyyanuthone A by the cytochrome P450 monooxygenase yanH to yield 22-deacetylyanuthone A. O-Mevalon transferase yanI then attaches mevalon to the hydroxyl group of 22-deacetylyanuthone A to produce yanuthone E. Finally, the FAD-dependent monooxygenase yanF oxidizes the hydroxyl group at C15 of yanuthone E to form yanuthone D. Furthermore, several branching points in the pathway lead to the production of yanuthones F and G from 7-deacetoxyyanuthone A; yanuthones H and I from 22-deacetylyanuthone A; and yanuthone J from yanuthone E. This chain is Decarboxylase yanB, found in Aspergillus niger (strain ATCC 1015 / CBS 113.46 / FGSC A1144 / LSHB Ac4 / NCTC 3858a / NRRL 328 / USDA 3528.7).